Consider the following 196-residue polypeptide: Putative NADH dehydrogenase/NAD(P)H nitroreductase Smlt0482 (196 aa).

It belongs to the nitroreductase family. HadB/RutE subfamily. The cofactor is FMN.

This chain is Putative NADH dehydrogenase/NAD(P)H nitroreductase Smlt0482, found in Stenotrophomonas maltophilia (strain K279a).